The chain runs to 412 residues: Putative competence-damage inducible protein (412 aa).

Belongs to the CinA family.

This Caldanaerobacter subterraneus subsp. tengcongensis (strain DSM 15242 / JCM 11007 / NBRC 100824 / MB4) (Thermoanaerobacter tengcongensis) protein is Putative competence-damage inducible protein.